A 155-amino-acid polypeptide reads, in one-letter code: 6,7-dimethyl-8-ribityllumazine synthase (155 aa).

5-amino-6-(D-ribitylamino)uracil is bound by residues Phe23, 57–59, and 80–82; these read AFE and AVI. Residue 85 to 86 participates in (2S)-2-hydroxy-3-oxobutyl phosphate binding; sequence AT. Catalysis depends on His88, which acts as the Proton donor. 5-amino-6-(D-ribitylamino)uracil is bound at residue Tyr113. Arg127 is a binding site for (2S)-2-hydroxy-3-oxobutyl phosphate.

It belongs to the DMRL synthase family.

The enzyme catalyses (2S)-2-hydroxy-3-oxobutyl phosphate + 5-amino-6-(D-ribitylamino)uracil = 6,7-dimethyl-8-(1-D-ribityl)lumazine + phosphate + 2 H2O + H(+). Its pathway is cofactor biosynthesis; riboflavin biosynthesis; riboflavin from 2-hydroxy-3-oxobutyl phosphate and 5-amino-6-(D-ribitylamino)uracil: step 1/2. Its function is as follows. Catalyzes the formation of 6,7-dimethyl-8-ribityllumazine by condensation of 5-amino-6-(D-ribitylamino)uracil with 3,4-dihydroxy-2-butanone 4-phosphate. This is the penultimate step in the biosynthesis of riboflavin. The sequence is that of 6,7-dimethyl-8-ribityllumazine synthase from Moorella thermoacetica (strain ATCC 39073 / JCM 9320).